Consider the following 153-residue polypeptide: Aspartate carbamoyltransferase regulatory chain (153 aa).

Residues Cys109, Cys114, Cys138, and Cys141 each contribute to the Zn(2+) site.

The protein belongs to the PyrI family. As to quaternary structure, contains catalytic and regulatory chains. Zn(2+) is required as a cofactor.

In terms of biological role, involved in allosteric regulation of aspartate carbamoyltransferase. The sequence is that of Aspartate carbamoyltransferase regulatory chain from Nitrosopumilus maritimus (strain SCM1).